Consider the following 261-residue polypeptide: MIELLFPGWLAGIMLACAAGPLGSFVVWRRMSYFGDTLAHASLLGVAFGLLLDVNPFYAVIAVTLLLAGGLVWLEKRPQLAIDTLLGIMAHSALSLGLVVVSLMSNIRVDLMAYLFGDLLAVTPEDLISIAIGVVIVVAILFWQWRNLLSMTISPDLAFVDGVKLQRVKLLLMLVTALTIGVAMKFVGALIITSLLIIPAATARRFARTPEQMAGVAVLVGMVAVTGGLTFSAVYDTPAGPSVVLCAALLFILSMMKKQAS.

Residues 1-7 (MIELLFP) are Periplasmic-facing. Residues 8 to 28 (GWLAGIMLACAAGPLGSFVVW) traverse the membrane as a helical segment. Over 29–53 (RRMSYFGDTLAHASLLGVAFGLLLD) the chain is Cytoplasmic. The helical transmembrane segment at 54-74 (VNPFYAVIAVTLLLAGGLVWL) threads the bilayer. The Periplasmic segment spans residues 75–83 (EKRPQLAID). A helical transmembrane segment spans residues 84 to 104 (TLLGIMAHSALSLGLVVVSLM). The Cytoplasmic portion of the chain corresponds to 105–121 (SNIRVDLMAYLFGDLLA). A helical membrane pass occupies residues 122–142 (VTPEDLISIAIGVVIVVAILF). Residues 143–177 (WQWRNLLSMTISPDLAFVDGVKLQRVKLLLMLVTA) lie on the Periplasmic side of the membrane. The helical transmembrane segment at 178-198 (LTIGVAMKFVGALIITSLLII) threads the bilayer. Residues 199 to 213 (PAATARRFARTPEQM) lie on the Cytoplasmic side of the membrane. A helical transmembrane segment spans residues 214 to 234 (AGVAVLVGMVAVTGGLTFSAV). A topological domain (periplasmic) is located at residue Y235. The chain crosses the membrane as a helical span at residues 236-256 (DTPAGPSVVLCAALLFILSMM). At 257 to 261 (KKQAS) the chain is on the cytoplasmic side.

The protein belongs to the ABC-3 integral membrane protein family.

The protein resides in the cell inner membrane. Involved in the high-affinity zinc uptake transport system. This chain is High-affinity zinc uptake system membrane protein ZnuB (znuB), found in Escherichia coli (strain K12).